The primary structure comprises 256 residues: Pimeloyl-[acyl-carrier protein] methyl ester esterase (256 aa).

The 228-residue stretch at 15–242 folds into the AB hydrolase-1 domain; that stretch reads HLVLLHGWGL…AAHAPFISHP (228 aa). Residues Trp22, 82–83, and 143–147 each bind substrate; these read SL and FLALQ. Ser82 acts as the Nucleophile in catalysis. Active-site residues include Asp207 and His235. His235 is a binding site for substrate.

The protein belongs to the AB hydrolase superfamily. Carboxylesterase BioH family. Monomer.

Its subcellular location is the cytoplasm. The enzyme catalyses 6-carboxyhexanoyl-[ACP] methyl ester + H2O = 6-carboxyhexanoyl-[ACP] + methanol + H(+). It functions in the pathway cofactor biosynthesis; biotin biosynthesis. In terms of biological role, the physiological role of BioH is to remove the methyl group introduced by BioC when the pimeloyl moiety is complete. It allows to synthesize pimeloyl-ACP via the fatty acid synthetic pathway through the hydrolysis of the ester bonds of pimeloyl-ACP esters. The polypeptide is Pimeloyl-[acyl-carrier protein] methyl ester esterase (Escherichia fergusonii (strain ATCC 35469 / DSM 13698 / CCUG 18766 / IAM 14443 / JCM 21226 / LMG 7866 / NBRC 102419 / NCTC 12128 / CDC 0568-73)).